The chain runs to 464 residues: DNA primase DnaG (464 aa).

A Toprim domain is found at 200–274 (DSIIVVEGRA…DVDYVARAPE (75 aa)). 3 residues coordinate Mg(2+): E206, D248, and D250. Positions 322–332 (NGREEKVREVK) are enriched in basic and acidic residues. The segment at 322–359 (NGREEKVREVKPPAPAPAPAPAPKPIEKPEPKEREEKI) is disordered. The segment covering 333–345 (PPAPAPAPAPAPK) has biased composition (pro residues). A compositionally biased stretch (basic and acidic residues) spans 346–359 (PIEKPEPKEREEKI).

It belongs to the archaeal DnaG primase family. As to quaternary structure, forms a ternary complex with MCM helicase and DNA. Component of the archaeal exosome complex. The cofactor is Mg(2+).

The catalysed reaction is ssDNA + n NTP = ssDNA/pppN(pN)n-1 hybrid + (n-1) diphosphate.. Its function is as follows. RNA polymerase that catalyzes the synthesis of short RNA molecules used as primers for DNA polymerase during DNA replication. Also part of the exosome, which is a complex involved in RNA degradation. Acts as a poly(A)-binding protein that enhances the interaction between heteromeric, adenine-rich transcripts and the exosome. This is DNA primase DnaG from Thermococcus onnurineus (strain NA1).